The sequence spans 636 residues: Beta-galactosidase-1-like protein 2 (636 aa).

A signal peptide spans 1–32; that stretch reads MTTWSLRRRPARTLGLLLLVVLGFLVLRRLDW. E201 serves as the catalytic Proton donor. E277 functions as the Nucleophile in the catalytic mechanism.

This sequence belongs to the glycosyl hydrolase 35 family.

The protein localises to the secreted. In Homo sapiens (Human), this protein is Beta-galactosidase-1-like protein 2 (GLB1L2).